The chain runs to 270 residues: Putative serine acetyltransferase (270 aa).

This sequence belongs to the transferase hexapeptide repeat family.

The protein localises to the cytoplasm. Its subcellular location is the nucleus. The catalysed reaction is L-serine + acetyl-CoA = O-acetyl-L-serine + CoA. Its pathway is amino-acid biosynthesis; L-cysteine biosynthesis; L-cysteine from L-serine: step 1/2. The polypeptide is Putative serine acetyltransferase (Schizosaccharomyces pombe (strain 972 / ATCC 24843) (Fission yeast)).